Here is an 80-residue protein sequence, read N- to C-terminus: Exodeoxyribonuclease 7 small subunit (80 aa).

The protein belongs to the XseB family. In terms of assembly, heterooligomer composed of large and small subunits.

Its subcellular location is the cytoplasm. It carries out the reaction Exonucleolytic cleavage in either 5'- to 3'- or 3'- to 5'-direction to yield nucleoside 5'-phosphates.. Functionally, bidirectionally degrades single-stranded DNA into large acid-insoluble oligonucleotides, which are then degraded further into small acid-soluble oligonucleotides. The chain is Exodeoxyribonuclease 7 small subunit from Photobacterium profundum (strain SS9).